The following is a 414-amino-acid chain: Esterase FrsA (414 aa).

This sequence belongs to the FrsA family.

The enzyme catalyses a carboxylic ester + H2O = an alcohol + a carboxylate + H(+). Functionally, catalyzes the hydrolysis of esters. The protein is Esterase FrsA of Escherichia coli O17:K52:H18 (strain UMN026 / ExPEC).